Consider the following 265-residue polypeptide: Chorismate mutase 2 (265 aa).

Positions 10–265 constitute a Chorismate mutase domain; that stretch reads GSGCSNVLSL…EVEYLLRRLD (256 aa).

As to quaternary structure, homodimer. As to expression, expressed in roots, stems, cauline leaves and flowers, and at lower levels in rosette leaves and siliques.

The protein resides in the cytoplasm. It is found in the cytosol. It carries out the reaction chorismate = prephenate. The protein operates within metabolic intermediate biosynthesis; prephenate biosynthesis; prephenate from chorismate: step 1/1. No allosteric regulation. The chain is Chorismate mutase 2 from Arabidopsis thaliana (Mouse-ear cress).